Reading from the N-terminus, the 260-residue chain is Small ribosomal subunit protein uS2 (260 aa).

A disordered region spans residues 225 to 260; that stretch reads KGQTQTEAAPNAQAAPEAAAPAEQPAEEAAAASSEG. Over residues 231–260 the composition is skewed to low complexity; it reads EAAPNAQAAPEAAAPAEQPAEEAAAASSEG.

The protein belongs to the universal ribosomal protein uS2 family.

This chain is Small ribosomal subunit protein uS2, found in Rhodopirellula baltica (strain DSM 10527 / NCIMB 13988 / SH1).